The primary structure comprises 69 residues: DNA gyrase inhibitor YacG (69 aa).

Zn(2+)-binding residues include C7, C10, C26, and C30.

Belongs to the DNA gyrase inhibitor YacG family. In terms of assembly, interacts with GyrB. It depends on Zn(2+) as a cofactor.

Its function is as follows. Inhibits all the catalytic activities of DNA gyrase by preventing its interaction with DNA. Acts by binding directly to the C-terminal domain of GyrB, which probably disrupts DNA binding by the gyrase. This Shewanella putrefaciens (strain CN-32 / ATCC BAA-453) protein is DNA gyrase inhibitor YacG.